A 171-amino-acid chain; its full sequence is Deoxyuridine 5'-triphosphate nucleotidohydrolase (171 aa).

Residue E143 coordinates Mg(2+).

Belongs to the dUTPase family. As to quaternary structure, homotrimer. It depends on Mg(2+) as a cofactor.

It catalyses the reaction dUTP + H2O = dUMP + diphosphate + H(+). The protein operates within pyrimidine metabolism; dUMP biosynthesis; dUMP from dCTP (dUTP route): step 2/2. This enzyme is involved in nucleotide metabolism: it produces dUMP, the immediate precursor of thymidine nucleotides and it decreases the intracellular concentration of dUTP, preventing uracil incorporation into DNA. This Oryza sativa subsp. japonica (Rice) protein is Deoxyuridine 5'-triphosphate nucleotidohydrolase (DUT).